A 487-amino-acid chain; its full sequence is Solute carrier family 22 member 15-like (487 aa).

A helical membrane pass occupies residues A22–G42. N70 carries N-linked (GlcNAc...) asparagine glycosylation. 11 helical membrane-spanning segments follow: residues L90–S110, P117–P137, V141–F161, S178–I198, T203–P223, I286–A306, L315–I335, A345–E365, T374–Y394, A406–P426, and M435–P455.

It belongs to the major facilitator (TC 2.A.1) superfamily. Organic cation transporter (TC 2.A.1.19) family.

It localises to the membrane. Functionally, probably transports organic cations. This is Solute carrier family 22 member 15-like (slc22a15b) from Xenopus tropicalis (Western clawed frog).